A 305-amino-acid chain; its full sequence is Methionyl-tRNA formyltransferase (305 aa).

Residue 110–113 (SLLP) coordinates (6S)-5,6,7,8-tetrahydrofolate.

Belongs to the Fmt family.

The enzyme catalyses L-methionyl-tRNA(fMet) + (6R)-10-formyltetrahydrofolate = N-formyl-L-methionyl-tRNA(fMet) + (6S)-5,6,7,8-tetrahydrofolate + H(+). In terms of biological role, attaches a formyl group to the free amino group of methionyl-tRNA(fMet). The formyl group appears to play a dual role in the initiator identity of N-formylmethionyl-tRNA by promoting its recognition by IF2 and preventing the misappropriation of this tRNA by the elongation apparatus. This chain is Methionyl-tRNA formyltransferase, found in Ureaplasma urealyticum serovar 10 (strain ATCC 33699 / Western).